Reading from the N-terminus, the 214-residue chain is uncharacterized protein (214 aa).

The first 17 residues, 1-17 (MLKKIIILFLGVFVLSG), serve as a signal peptide directing secretion. Residue cysteine 18 is the site of N-palmitoyl cysteine attachment. Cysteine 18 carries the S-diacylglycerol cysteine lipid modification. The span at 64 to 77 (DNLDDPEDDDDDYD) shows a compositional bias: acidic residues. 3 disordered regions span residues 64–83 (DNLD…LRGE), 106–138 (YKAE…KERK), and 166–197 (TANQ…SKVK). Positions 120 to 162 (TLSKANKKVRKDNTDKERKMQEELDQIKAMLRETKRDISKYTC) form a coiled coil.

It localises to the cell membrane. This is an uncharacterized protein from Rickettsia bellii (strain RML369-C).